An 86-amino-acid polypeptide reads, in one-letter code: Large ribosomal subunit protein bL27 (86 aa).

Positions 1–10 (MAQKKGGGST) are enriched in gly residues. The interval 1 to 21 (MAQKKGGGSTRNGRDSESKRL) is disordered.

It belongs to the bacterial ribosomal protein bL27 family.

The chain is Large ribosomal subunit protein bL27 from Ralstonia nicotianae (strain ATCC BAA-1114 / GMI1000) (Ralstonia solanacearum).